Consider the following 306-residue polypeptide: tRNA dimethylallyltransferase 2 (306 aa).

11–18 (GPTASGKT) is a binding site for ATP. 13–18 (TASGKT) contributes to the substrate binding site. Residues 36-39 (DSRQ) form an interaction with substrate tRNA region.

Belongs to the IPP transferase family. In terms of assembly, monomer. Requires Mg(2+) as cofactor.

It catalyses the reaction adenosine(37) in tRNA + dimethylallyl diphosphate = N(6)-dimethylallyladenosine(37) in tRNA + diphosphate. In terms of biological role, catalyzes the transfer of a dimethylallyl group onto the adenine at position 37 in tRNAs that read codons beginning with uridine, leading to the formation of N6-(dimethylallyl)adenosine (i(6)A). This is tRNA dimethylallyltransferase 2 from Bacteroides fragilis (strain ATCC 25285 / DSM 2151 / CCUG 4856 / JCM 11019 / LMG 10263 / NCTC 9343 / Onslow / VPI 2553 / EN-2).